The chain runs to 445 residues: MTKVITRFAPSPTGMLHVGNIRAALLNWLYAKKHDGQFILRFDDTDLERSKQEYKDAIRADLKFLNLNWDQTFNQLSRLSRYDEIKKLLLDKKRLYACYETPEELELKRKFQLSKGLPPIYDRAALNLTEDQIQKYIEQGRKPHYRFLVNHEPITWHDMIKGEVKYEGKALSDPIVIRADGSMTYMLCSVIDDVDYEITHIIRGEDHVSNTAIQIQMFEALDKYPPTFGHLSLIINKDEKISKRVGGFEIATLREEVGLEAMAIASFFSLLGSSAQIIPHKKMDELVKHFEISSFSKSPTIYQPEDLERLNHKLLISLEFNEVKDRLKEIDAEYIDENFWLSVRPNLKKLFDAKDWWEICHKTPNIQDLNLDKEYLKQAAELLPEEEITTETWGIWTKKLAAITNRKGKELFLPLRLALTGKESGPEISKVLPLIKREEIVKRLT.

Residues P10–N20 carry the 'HIGH' region motif. A 'KMSKS' region motif is present at residues K240–R244. K243 contributes to the ATP binding site.

Belongs to the class-I aminoacyl-tRNA synthetase family. Glutamate--tRNA ligase type 1 subfamily. In terms of assembly, monomer.

Its subcellular location is the cytoplasm. It catalyses the reaction tRNA(Glu) + L-glutamate + ATP = L-glutamyl-tRNA(Glu) + AMP + diphosphate. In terms of biological role, catalyzes the attachment of glutamate to tRNA(Glu) in a two-step reaction: glutamate is first activated by ATP to form Glu-AMP and then transferred to the acceptor end of tRNA(Glu). In Rickettsia bellii (strain OSU 85-389), this protein is Glutamate--tRNA ligase 1.